The sequence spans 654 residues: Probable Xaa-Pro aminopeptidase P (654 aa).

Mn(2+)-binding residues include Asp449, Asp460, Glu558, and Glu572.

The protein belongs to the peptidase M24B family. Requires Mn(2+) as cofactor.

It catalyses the reaction Release of any N-terminal amino acid, including proline, that is linked to proline, even from a dipeptide or tripeptide.. Functionally, catalyzes the removal of a penultimate prolyl residue from the N-termini of peptides. The sequence is that of Probable Xaa-Pro aminopeptidase P (ampp) from Aspergillus fumigatus (strain CBS 144.89 / FGSC A1163 / CEA10) (Neosartorya fumigata).